Consider the following 359-residue polypeptide: Small ribosomal subunit protein mS22 (359 aa).

The protein belongs to the mitochondrion-specific ribosomal protein mS22 family. Component of the mitochondrial ribosome small subunit (28S) which comprises a 12S rRNA and about 30 distinct proteins.

The protein localises to the mitochondrion. In Bos taurus (Bovine), this protein is Small ribosomal subunit protein mS22 (MRPS22).